A 324-amino-acid chain; its full sequence is Lipoyl synthase (324 aa).

7 residues coordinate [4Fe-4S] cluster: Cys72, Cys77, Cys83, Cys98, Cys102, Cys105, and Ser313. In terms of domain architecture, Radical SAM core spans 84–302; the sequence is FRFGTASFMI…AQEGKKMGFL (219 aa).

This sequence belongs to the radical SAM superfamily. Lipoyl synthase family. [4Fe-4S] cluster serves as cofactor.

It is found in the cytoplasm. It catalyses the reaction [[Fe-S] cluster scaffold protein carrying a second [4Fe-4S](2+) cluster] + N(6)-octanoyl-L-lysyl-[protein] + 2 oxidized [2Fe-2S]-[ferredoxin] + 2 S-adenosyl-L-methionine + 4 H(+) = [[Fe-S] cluster scaffold protein] + N(6)-[(R)-dihydrolipoyl]-L-lysyl-[protein] + 4 Fe(3+) + 2 hydrogen sulfide + 2 5'-deoxyadenosine + 2 L-methionine + 2 reduced [2Fe-2S]-[ferredoxin]. The protein operates within protein modification; protein lipoylation via endogenous pathway; protein N(6)-(lipoyl)lysine from octanoyl-[acyl-carrier-protein]: step 2/2. Functionally, catalyzes the radical-mediated insertion of two sulfur atoms into the C-6 and C-8 positions of the octanoyl moiety bound to the lipoyl domains of lipoate-dependent enzymes, thereby converting the octanoylated domains into lipoylated derivatives. This chain is Lipoyl synthase, found in Dichelobacter nodosus (strain VCS1703A).